A 137-amino-acid chain; its full sequence is MAGVWKVLVVLVGLAVVACAIPRRRLRYEEVVAQALQFYNEGQQGQPLFRLLEATPPPSLNSKSRIPLNFRIKETVCIFTLDRQPGNCAFREGGEERICRGAFVRRRWVRALTLRCDRDQRRQPEFPRVTRPAGPTA.

The N-terminal stretch at 1–20 is a signal peptide; it reads MAGVWKVLVVLVGLAVVACA. Cystine bridges form between C77–C88 and C99–C116.

It belongs to the cathelicidin family. As to expression, large granules of neutrophils.

The protein resides in the secreted. Binds to bacterial lipopolysaccharides (LPS), potentiates strongly the early antibacterial effects of BPI. Inhibits the late lethal action of BPI. The polypeptide is 15 kDa protein A (Oryctolagus cuniculus (Rabbit)).